The primary structure comprises 1402 residues: Transcription elongation factor spt-6 (1402 aa).

Residues 1–199 (MSNSMRDLID…PKDRGLNIDT (199 aa)) are disordered. 4 stretches are compositionally biased toward acidic residues: residues 10–28 (DGEA…DEEA), 40–52 (DSSE…EDEE), 62–75 (IVDE…EDSD), and 90–102 (EEEE…DLDL). Residues 123-135 (HRDDHRPTERRGL) show a composition bias toward basic and acidic residues. The segment covering 161-176 (DEFDDFIEDDYPEDDE) has biased composition (acidic residues). Basic and acidic residues predominate over residues 177-199 (ERRHREEDEEVARPKDRGLNIDT). Residues 1094 to 1161 (GMIVAANVRV…KEFVSKLSMR (68 aa)) enclose the S1 motif domain. One can recognise an SH2 domain in the interval 1209-1306 (PLFKPFNSTQ…KKVDELMQCD (98 aa)).

This sequence belongs to the SPT6 family.

Its subcellular location is the nucleus. It localises to the chromosome. Functionally, histone H3-H4 chaperone that plays a role in maintenance of chromatin structure during RNA polymerase II transcription elongation thereby repressing transcription initiation from cryptic promoters. Mediates the reassembly of nucleosomes onto the promoters of at least a selected set of genes during repression; the nucleosome reassembly is essential for transcriptional repression. Essential for viability. This chain is Transcription elongation factor spt-6 (spt-6), found in Neurospora crassa (strain ATCC 24698 / 74-OR23-1A / CBS 708.71 / DSM 1257 / FGSC 987).